The sequence spans 565 residues: NAD-dependent malic enzyme (565 aa).

Tyr-104 acts as the Proton donor in catalysis. Arg-157 is a binding site for NAD(+). Lys-175 (proton acceptor) is an active-site residue. A divalent metal cation contacts are provided by Glu-246, Asp-247, and Asp-270. Residues Asp-270 and Asn-418 each contribute to the NAD(+) site.

It belongs to the malic enzymes family. In terms of assembly, homotetramer. The cofactor is Mg(2+). Mn(2+) serves as cofactor.

It carries out the reaction (S)-malate + NAD(+) = pyruvate + CO2 + NADH. It catalyses the reaction oxaloacetate + H(+) = pyruvate + CO2. This chain is NAD-dependent malic enzyme, found in Escherichia coli O6:H1 (strain CFT073 / ATCC 700928 / UPEC).